The following is a 257-amino-acid chain: Na(+)-translocating NADH-quinone reductase subunit C (257 aa).

The helical transmembrane segment at 12-32 (LFVVIALSLVCSIIVSAAAVG) threads the bilayer. T225 is subject to FMN phosphoryl threonine.

This sequence belongs to the NqrC family. Composed of six subunits; NqrA, NqrB, NqrC, NqrD, NqrE and NqrF. FMN serves as cofactor.

It localises to the cell inner membrane. The enzyme catalyses a ubiquinone + n Na(+)(in) + NADH + H(+) = a ubiquinol + n Na(+)(out) + NAD(+). Its function is as follows. NQR complex catalyzes the reduction of ubiquinone-1 to ubiquinol by two successive reactions, coupled with the transport of Na(+) ions from the cytoplasm to the periplasm. NqrA to NqrE are probably involved in the second step, the conversion of ubisemiquinone to ubiquinol. This Vibrio cholerae serotype O1 (strain ATCC 39541 / Classical Ogawa 395 / O395) protein is Na(+)-translocating NADH-quinone reductase subunit C.